Consider the following 671-residue polypeptide: UvrABC system protein B (671 aa).

One can recognise a Helicase ATP-binding domain in the interval 25 to 412; sequence EGIDAGLAHQ…AGRIVEQVVR (388 aa). ATP is bound at residue 38-45; the sequence is GVTGSGKT. Positions 91 to 114 match the Beta-hairpin motif; it reads YYDYYQPEAYVPSSDTFIEKDASI. The region spanning 429–582 is the Helicase C-terminal domain; that stretch reads QVDDLLSEIH…QIAFNLEHGI (154 aa). Residues 601–624 are disordered; that stretch reads PGSRSKKRKGMAKAAEENARYENE. Over residues 614 to 624 the composition is skewed to basic and acidic residues; sequence AAEENARYENE. Residues 632–667 enclose the UVR domain; it reads NKRIRQLEEKMYQLARDLEFEAAAQMRDEIGKLRER.

This sequence belongs to the UvrB family. As to quaternary structure, forms a heterotetramer with UvrA during the search for lesions. Interacts with UvrC in an incision complex.

The protein resides in the cytoplasm. The UvrABC repair system catalyzes the recognition and processing of DNA lesions. A damage recognition complex composed of 2 UvrA and 2 UvrB subunits scans DNA for abnormalities. Upon binding of the UvrA(2)B(2) complex to a putative damaged site, the DNA wraps around one UvrB monomer. DNA wrap is dependent on ATP binding by UvrB and probably causes local melting of the DNA helix, facilitating insertion of UvrB beta-hairpin between the DNA strands. Then UvrB probes one DNA strand for the presence of a lesion. If a lesion is found the UvrA subunits dissociate and the UvrB-DNA preincision complex is formed. This complex is subsequently bound by UvrC and the second UvrB is released. If no lesion is found, the DNA wraps around the other UvrB subunit that will check the other stand for damage. In Pseudomonas syringae pv. syringae (strain B728a), this protein is UvrABC system protein B.